Reading from the N-terminus, the 230-residue chain is Cytidylate kinase (230 aa).

Residue 12 to 20 coordinates ATP; that stretch reads GPSGAGKGT.

Belongs to the cytidylate kinase family. Type 1 subfamily.

Its subcellular location is the cytoplasm. The enzyme catalyses CMP + ATP = CDP + ADP. It carries out the reaction dCMP + ATP = dCDP + ADP. The sequence is that of Cytidylate kinase from Shewanella sp. (strain MR-4).